Consider the following 111-residue polypeptide: Large ribosomal subunit protein uL23 (111 aa).

The protein belongs to the universal ribosomal protein uL23 family. Part of the 50S ribosomal subunit. Contacts protein L29, and trigger factor when it is bound to the ribosome.

One of the early assembly proteins it binds 23S rRNA. One of the proteins that surrounds the polypeptide exit tunnel on the outside of the ribosome. Forms the main docking site for trigger factor binding to the ribosome. The sequence is that of Large ribosomal subunit protein uL23 from Chlamydia caviae (strain ATCC VR-813 / DSM 19441 / 03DC25 / GPIC) (Chlamydophila caviae).